Here is a 382-residue protein sequence, read N- to C-terminus: tRNA (guanine(26)-N(2))-dimethyltransferase (382 aa).

A Trm1 methyltransferase domain is found at 4–370 (TEVIEGKARL…REFSEILECV (367 aa)). Positions 44, 69, 87, 113, and 114 each coordinate S-adenosyl-L-methionine. Residues Cys244, Cys247, Cys261, and Cys264 each coordinate Zn(2+).

It belongs to the class I-like SAM-binding methyltransferase superfamily. Trm1 family.

The enzyme catalyses guanosine(26) in tRNA + 2 S-adenosyl-L-methionine = N(2)-dimethylguanosine(26) in tRNA + 2 S-adenosyl-L-homocysteine + 2 H(+). Its function is as follows. Dimethylates a single guanine residue at position 26 of a number of tRNAs using S-adenosyl-L-methionine as donor of the methyl groups. The protein is tRNA (guanine(26)-N(2))-dimethyltransferase of Metallosphaera sedula (strain ATCC 51363 / DSM 5348 / JCM 9185 / NBRC 15509 / TH2).